A 329-amino-acid chain; its full sequence is Large ribosomal subunit protein uL3 (329 aa).

This sequence belongs to the universal ribosomal protein uL3 family. Part of the 50S ribosomal subunit. Forms a cluster with proteins L14 and L24e.

One of the primary rRNA binding proteins, it binds directly near the 3'-end of the 23S rRNA, where it nucleates assembly of the 50S subunit. This is Large ribosomal subunit protein uL3 from Picrophilus torridus (strain ATCC 700027 / DSM 9790 / JCM 10055 / NBRC 100828 / KAW 2/3).